A 226-amino-acid chain; its full sequence is Cytidylate kinase (226 aa).

10-18 (GPASSGKST) serves as a coordination point for ATP.

This sequence belongs to the cytidylate kinase family. Type 1 subfamily.

The protein localises to the cytoplasm. The catalysed reaction is CMP + ATP = CDP + ADP. It catalyses the reaction dCMP + ATP = dCDP + ADP. The protein is Cytidylate kinase of Streptococcus pyogenes serotype M5 (strain Manfredo).